A 98-amino-acid polypeptide reads, in one-letter code: MSPIYINLMMAFIFSLLGTLLFRSHLMSTLLCLEGMMLSLFIMVTSSALNTQSMITYVIPITMLVFGACEAAIGLALLVMISNTYGTDYVQNLNLLQC.

Transmembrane regions (helical) follow at residues 2–22 (SPIYINLMMAFIFSLLGTLLF), 26–46 (LMSTLLCLEGMMLSLFIMVTS), and 61–81 (ITMLVFGACEAAIGLALLVMI).

Belongs to the complex I subunit 4L family. In terms of assembly, core subunit of respiratory chain NADH dehydrogenase (Complex I) which is composed of 45 different subunits.

It is found in the mitochondrion inner membrane. It catalyses the reaction a ubiquinone + NADH + 5 H(+)(in) = a ubiquinol + NAD(+) + 4 H(+)(out). In terms of biological role, core subunit of the mitochondrial membrane respiratory chain NADH dehydrogenase (Complex I) which catalyzes electron transfer from NADH through the respiratory chain, using ubiquinone as an electron acceptor. Part of the enzyme membrane arm which is embedded in the lipid bilayer and involved in proton translocation. This Nephelomys albigularis (Tomes's rice rat) protein is NADH-ubiquinone oxidoreductase chain 4L (MT-ND4L).